Reading from the N-terminus, the 475-residue chain is 7-dehydrocholesterol reductase (475 aa).

Residues 1 to 21 form a disordered region; it reads MAAKSQPNIPKAKSLDGVTND. Phosphoserine is present on Ser14. Transmembrane regions (helical) follow at residues 40–60, 154–174, 177–197, 266–286, 306–326, and 331–351; these read LASVIFLLLFAPFIVYYFIMA, THLLWFANAHLLSWFSPTIIF, WIPLLWCANILGYAVSTFAMV, VTNAMVLVNVLQAIYVIDFFW, LGWGDCVWLPYLYTLQGLYLV, and QLSTPHAVGVLLLGLVGYYIF. NADP(+) is bound by residues Lys358, Arg362, Leu395, Trp400, and 407-408; that span reads NY. Residues 420 to 440 form a helical membrane-spanning segment; the sequence is LACGGGHLLPYFYIIYMAILL. Residues Asp447, 451–455, and Tyr462 contribute to the NADP(+) site; that span reads CASKY.

It belongs to the ERG4/ERG24 family. In terms of assembly, interacts with DHCR24; this interaction regulates DHCR7 activity. Interacts with TMEM147. Widely expressed. Most abundant in adrenal gland, liver, testis, and brain.

It is found in the endoplasmic reticulum membrane. It catalyses the reaction cholesterol + NADP(+) = 7-dehydrocholesterol + NADPH + H(+). The catalysed reaction is 7-dehydrodesmosterol + NADPH + H(+) = desmosterol + NADP(+). The enzyme catalyses 5,6alpha-epoxy-5alpha-cholestan-3beta-ol + H2O = 5alpha-cholestane-3beta,5,6beta-triol. It carries out the reaction 5,6beta-epoxy-5beta-cholestan-3beta-ol + H2O = 5alpha-cholestane-3beta,5,6beta-triol. Its pathway is steroid biosynthesis; cholesterol biosynthesis. Its activity is regulated as follows. 7-DHC reductase and cholesterol-5,6-epoxide hydrolase (ChEH) activities are inhibited by tamoxifen and the selective AEBS ligand (4-benzyl-phenoxy)-ethyl-N-pyrrolidine (PBPE). ChEH activity is inhibited by oleic acid. In terms of biological role, oxidoreductase that catalyzes the last step of the cholesterol synthesis pathway, which transforms cholesta-5,7-dien-3beta-ol (7-dehydrocholesterol,7-DHC) into cholesterol by reducing the C7-C8 double bond of its sterol core. Can also metabolize cholesta-5,7,24-trien-3beta-ol (7-dehydrodemosterol, 7-DHD) to desmosterol, which is then metabolized by the Delta(24)-sterol reductase (DHCR24) to cholesterol. Modulates ferroptosis (a form of regulated cell death driven by iron-dependent lipid peroxidation) through the metabolic breakdown of the anti-ferroptotic metabolites 7-DHC and 7-DHD which, when accumulated, divert the propagation of peroxyl radical-mediated damage from phospholipid components to its sterol core, protecting plasma and mitochondrial membranes from phospholipid autoxidation. Component of the microsomal antiestrogen binding site (AEBS), a multiproteic complex at the ER membrane that consists of an association between cholestenol Delta-isomerase/EBP and DHCR7. This complex is responsible for cholesterol-5,6-epoxide hydrolase (ChEH) activity, which consists in the hydration of cholesterol-5,6-epoxides (5,6-EC) into cholestane-3beta,5alpha,6beta-triol (CT). The precise role of each component of this complex has not been described yet. The sequence is that of 7-dehydrocholesterol reductase from Homo sapiens (Human).